The chain runs to 138 residues: Putative pre-16S rRNA nuclease (138 aa).

The protein belongs to the YqgF nuclease family.

It is found in the cytoplasm. Its function is as follows. Could be a nuclease involved in processing of the 5'-end of pre-16S rRNA. The chain is Putative pre-16S rRNA nuclease from Geobacillus thermodenitrificans (strain NG80-2).